The chain runs to 118 residues: Small ribosomal subunit protein uS13 (118 aa).

Residues 94–118 (GLPLRGQRTKTNARTRKGPRKPIRK) are disordered.

Belongs to the universal ribosomal protein uS13 family. Part of the 30S ribosomal subunit. Forms a loose heterodimer with protein S19. Forms two bridges to the 50S subunit in the 70S ribosome.

Functionally, located at the top of the head of the 30S subunit, it contacts several helices of the 16S rRNA. In the 70S ribosome it contacts the 23S rRNA (bridge B1a) and protein L5 of the 50S subunit (bridge B1b), connecting the 2 subunits; these bridges are implicated in subunit movement. Contacts the tRNAs in the A and P-sites. The protein is Small ribosomal subunit protein uS13 of Alcanivorax borkumensis (strain ATCC 700651 / DSM 11573 / NCIMB 13689 / SK2).